Here is a 73-residue protein sequence, read N- to C-terminus: Protein DSS1 HOMOLOG ON CHROMOSOME V (73 aa).

This sequence belongs to the DSS1/SEM1 family. Part of the 26S proteasome. Interacts with BRCA2B. Interacts with EER5. Interacts with UCH1 and UCH2.

Subunit of the 26S proteasome which plays a role in ubiquitin-dependent proteolysis. Also associates with the TREX-2 complex that is required for transcription-coupled mRNA export. This is Protein DSS1 HOMOLOG ON CHROMOSOME V from Arabidopsis thaliana (Mouse-ear cress).